Consider the following 343-residue polypeptide: MTNFYKVFLAVFILVCCNISHAAVSFIGSTENDVGPSQSSYSRTHAMDNLPFVYNTGYNIGYQNANVWRISGGFCVGLDGKVDLPVVGSLDGQSIYGLTEEVGLLIWMGDTNYSRGTAMSGNSWENVFSGWCVGNYVSTQGLSVHVRPVILKRNSSAQYSVQKTSIGSIRMRPYNGSSAGSVQTTVNFSLNPFTLNDTVTSCRLLTPSAVNVSLAAISAGQLPSSGDEVVAGTTSLKLQCDAGVTVWATLTDATTPSNRSDILTLTGASTATGVGLRIYKNTDSTPLKFGPDSPVKGNENQWQLSTGTETSPSVRLYVKYVNTGEGINPGTVNGISTFTFSYQ.

An N-terminal signal peptide occupies residues 1–22 (MTNFYKVFLAVFILVCCNISHA). The segment at 23 to 199 (AVSFIGSTEN…LNPFTLNDTV (177 aa)) is receptor-binding lectin domain. Residues 65–66 (AN), 110–111 (DT), and 138–141 (STQG) contribute to the a carbohydrate site. A disulfide bridge links cysteine 75 with cysteine 132. The interval 200 to 343 (TSCRLLTPSA…GISTFTFSYQ (144 aa)) is fimbrillin-binding domain. The disordered stretch occupies residues 287–307 (LKFGPDSPVKGNENQWQLSTG). Over residues 298 to 307 (NENQWQLSTG) the composition is skewed to polar residues.

The protein belongs to the fimbrial protein family.

It is found in the fimbrium. Essential fimbrial adhesion factor that mediates binding to N-acetylglucosamine-containing receptors in the host intestinal microvilli, leading to colonization of the intestinal tissue, and diarrhea or septicemia. Also confers adhesiveness to laminin and basement membranes. This is F17e-G fimbrial adhesin (f17eG) from Escherichia coli.